The chain runs to 544 residues: Chaperonin GroEL (544 aa).

ATP contacts are provided by residues 30–33, lysine 51, 87–91, glycine 415, 479–481, and aspartate 495; these read TLGP, DGTTT, and NAA.

Belongs to the chaperonin (HSP60) family. Forms a cylinder of 14 subunits composed of two heptameric rings stacked back-to-back. Interacts with the co-chaperonin GroES.

Its subcellular location is the cytoplasm. It carries out the reaction ATP + H2O + a folded polypeptide = ADP + phosphate + an unfolded polypeptide.. Its function is as follows. Together with its co-chaperonin GroES, plays an essential role in assisting protein folding. The GroEL-GroES system forms a nano-cage that allows encapsulation of the non-native substrate proteins and provides a physical environment optimized to promote and accelerate protein folding. This Acinetobacter baumannii (strain AB307-0294) protein is Chaperonin GroEL.